The following is a 294-amino-acid chain: 4-hydroxy-tetrahydrodipicolinate synthase (294 aa).

Thr45 is a pyruvate binding site. The Proton donor/acceptor role is filled by Tyr133. Lys162 functions as the Schiff-base intermediate with substrate in the catalytic mechanism. Ile204 is a binding site for pyruvate.

The protein belongs to the DapA family. Homotetramer; dimer of dimers.

It localises to the cytoplasm. The enzyme catalyses L-aspartate 4-semialdehyde + pyruvate = (2S,4S)-4-hydroxy-2,3,4,5-tetrahydrodipicolinate + H2O + H(+). It functions in the pathway amino-acid biosynthesis; L-lysine biosynthesis via DAP pathway; (S)-tetrahydrodipicolinate from L-aspartate: step 3/4. Catalyzes the condensation of (S)-aspartate-beta-semialdehyde [(S)-ASA] and pyruvate to 4-hydroxy-tetrahydrodipicolinate (HTPA). This Bartonella quintana (strain Toulouse) (Rochalimaea quintana) protein is 4-hydroxy-tetrahydrodipicolinate synthase.